The sequence spans 328 residues: Flagellar motor switch protein FliM (328 aa).

Residues 1–45 form an interaction with unphosphorylated CheY region; sequence MSDVLSQEEINQLIEALMKGELKEEDLLKEEEEKKVKPYDFKRPS.

The protein belongs to the FliM family. In terms of assembly, interacts (via N-terminus) with unphosphorylated CheY. Interacts (via central domain) with FliG (via central domain or via central domain and C-terminus).

It localises to the cell inner membrane. Its subcellular location is the bacterial flagellum basal body. In terms of biological role, fliM is one of three proteins (FliG, FliN, FliM) that forms the rotor-mounted switch complex (C ring), located at the base of the basal body. This complex interacts with the CheY and CheX chemotaxis proteins, in addition to contacting components of the motor that determine the direction of flagellar rotation. In Thermotoga maritima (strain ATCC 43589 / DSM 3109 / JCM 10099 / NBRC 100826 / MSB8), this protein is Flagellar motor switch protein FliM.